A 192-amino-acid chain; its full sequence is Shikimate kinase (192 aa).

27-32 (GTGKTT) provides a ligand contact to ATP. Thr31 is a Mg(2+) binding site. 3 residues coordinate substrate: Asp49, Arg73, and Gly95. Arg133 contributes to the ATP binding site. Residue Arg152 coordinates substrate.

It belongs to the shikimate kinase family. Monomer. The cofactor is Mg(2+).

Its subcellular location is the cytoplasm. The enzyme catalyses shikimate + ATP = 3-phosphoshikimate + ADP + H(+). Its pathway is metabolic intermediate biosynthesis; chorismate biosynthesis; chorismate from D-erythrose 4-phosphate and phosphoenolpyruvate: step 5/7. Functionally, catalyzes the specific phosphorylation of the 3-hydroxyl group of shikimic acid using ATP as a cosubstrate. In Hahella chejuensis (strain KCTC 2396), this protein is Shikimate kinase.